The following is a 206-amino-acid chain: Recombination protein RecR (206 aa).

The C4-type zinc finger occupies 58-73 (CENCHNISDTKVCEIC). A Toprim domain is found at 81 to 176 (QTICVVEDIR…IISTIARGIS (96 aa)).

Belongs to the RecR family.

Its function is as follows. May play a role in DNA repair. It seems to be involved in an RecBC-independent recombinational process of DNA repair. It may act with RecF and RecO. The sequence is that of Recombination protein RecR from Flavobacterium johnsoniae (strain ATCC 17061 / DSM 2064 / JCM 8514 / BCRC 14874 / CCUG 350202 / NBRC 14942 / NCIMB 11054 / UW101) (Cytophaga johnsonae).